The following is a 316-amino-acid chain: Aspartate carbamoyltransferase catalytic subunit (316 aa).

Residues Arg60 and Thr61 each contribute to the carbamoyl phosphate site. Lys88 provides a ligand contact to L-aspartate. Residues Arg110, His138, and Gln141 each coordinate carbamoyl phosphate. Arg171 and Arg225 together coordinate L-aspartate. Carbamoyl phosphate-binding residues include Gly266 and Pro267.

It belongs to the aspartate/ornithine carbamoyltransferase superfamily. ATCase family. Heterododecamer (2C3:3R2) of six catalytic PyrB chains organized as two trimers (C3), and six regulatory PyrI chains organized as three dimers (R2).

It catalyses the reaction carbamoyl phosphate + L-aspartate = N-carbamoyl-L-aspartate + phosphate + H(+). It functions in the pathway pyrimidine metabolism; UMP biosynthesis via de novo pathway; (S)-dihydroorotate from bicarbonate: step 2/3. Functionally, catalyzes the condensation of carbamoyl phosphate and aspartate to form carbamoyl aspartate and inorganic phosphate, the committed step in the de novo pyrimidine nucleotide biosynthesis pathway. This chain is Aspartate carbamoyltransferase catalytic subunit, found in Rhizorhabdus wittichii (strain DSM 6014 / CCUG 31198 / JCM 15750 / NBRC 105917 / EY 4224 / RW1) (Sphingomonas wittichii).